The primary structure comprises 510 residues: 2,3-bisphosphoglycerate-independent phosphoglycerate mutase (510 aa).

The Mn(2+) site is built by aspartate 12 and serine 62. Serine 62 (phosphoserine intermediate) is an active-site residue. Substrate-binding positions include histidine 123, arginine 152–aspartate 153, arginine 184, arginine 190, arginine 257–arginine 260, and lysine 331. 5 residues coordinate Mn(2+): aspartate 399, histidine 403, aspartate 440, histidine 441, and histidine 458.

Belongs to the BPG-independent phosphoglycerate mutase family. Monomer. Mn(2+) is required as a cofactor.

The catalysed reaction is (2R)-2-phosphoglycerate = (2R)-3-phosphoglycerate. It participates in carbohydrate degradation; glycolysis; pyruvate from D-glyceraldehyde 3-phosphate: step 3/5. Functionally, catalyzes the interconversion of 2-phosphoglycerate and 3-phosphoglycerate. The chain is 2,3-bisphosphoglycerate-independent phosphoglycerate mutase from Lawsonia intracellularis (strain PHE/MN1-00).